The following is a 469-amino-acid chain: Calcium-binding mitochondrial carrier protein SCaMC-2 (469 aa).

Residues 1-189 are Mitochondrial intermembrane-facing; it reads MLCLCLYVPL…ERQTGMWWRH (189 aa). 3 EF-hand domains span residues 47–80, 78–113, and 114–149; these read TYRQWKQKIVQAGDKDLDGQLDFEEFVHYLQDHE, DHEKKLRLVFKSLDKKNDGRIDAQEIMQSLRDLGVK, and ISEQQAEKILKSMDKNGTMTIDWNEWRDYHLLHPVE. The Ca(2+) site is built by Asp-60, Asp-62, Asp-64, Gln-66, and Glu-71. Solcar repeat units follow at residues 184–270, 278–363, and 375–463; these read GMWW…IKRL, LRIH…LKNA, and PGVF…LKIT. A helical transmembrane segment spans residues 190-207; that stretch reads LVAGGGAGAVSRTCTAPL. Topologically, residues 208-244 are mitochondrial matrix; sequence DRLKVLMQVHASRSNNMCIVGGFTQMIREGGARSLWR. Residues 245–264 form a helical membrane-spanning segment; sequence GNGINVLKIAPESAIKFMAY. Over 265–287 the chain is Mitochondrial intermembrane; the sequence is EQIKRLIGSDQETLRIHERLVAG. A helical membrane pass occupies residues 288–301; it reads SLAGAIAQSSIYPM. At 302 to 337 the chain is on the mitochondrial matrix side; sequence EVLKTRMALRKTGQYSGMLDCARKILAREGMAAFYK. The helical transmembrane segment at 338-357 threads the bilayer; it reads GYVPNMLGIIPYAGIDLAVY. The Mitochondrial intermembrane segment spans residues 358–380; it reads ETLKNAWLQRYAVNSADPGVFVL. A helical membrane pass occupies residues 381-398; that stretch reads LACGTMSSTCGQLASYPL. Over 399-437 the chain is Mitochondrial matrix; sequence ALVRTRMQAQASMEGAPEVTMSSLFKQILRTEGAFGLYR. A helical membrane pass occupies residues 438–457; sequence GLAPNFMKVIPAVSISYVVY. Topologically, residues 458–469 are mitochondrial intermembrane; sequence ENLKITLGVQSR.

It belongs to the mitochondrial carrier (TC 2.A.29) family.

It is found in the mitochondrion inner membrane. Functionally, calcium-dependent mitochondrial solute carrier. Mitochondrial solute carriers shuttle metabolites, nucleotides, and cofactors through the mitochondrial inner membrane. May act as a ATP-Mg/Pi exchanger that mediates the transport of Mg-ATP in exchange for phosphate, catalyzing the net uptake or efflux of adenine nucleotides into or from the mitochondria. This Bos taurus (Bovine) protein is Calcium-binding mitochondrial carrier protein SCaMC-2 (SLC25A25).